The following is a 47-amino-acid chain: MSNPKGSRKHFVPNHIGTQPRAAGGNKGKQMQDQSGQHAQVIQTKGE.

The segment covering 1-12 has biased composition (basic residues); it reads MSNPKGSRKHFV. Positions 1-47 are disordered; the sequence is MSNPKGSRKHFVPNHIGTQPRAAGGNKGKQMQDQSGQHAQVIQTKGE. A compositionally biased stretch (polar residues) spans 29–47; that stretch reads KQMQDQSGQHAQVIQTKGE.

This sequence belongs to the SspN family.

The protein localises to the spore core. This Geobacillus kaustophilus (strain HTA426) protein is Small, acid-soluble spore protein N.